Consider the following 308-residue polypeptide: Tyrosine recombinase XerC (308 aa).

The Core-binding (CB) domain occupies 20–101 (SKLHTLIDDF…SVKAFSSWAQ (82 aa)). The 181-residue stretch at 122–302 (DLPKILGEQQ…SNKRLLEAFN (181 aa)) folds into the Tyr recombinase domain. Active-site residues include arginine 163, lysine 187, histidine 254, arginine 257, and histidine 280. Tyrosine 289 (O-(3'-phospho-DNA)-tyrosine intermediate) is an active-site residue.

It belongs to the 'phage' integrase family. XerC subfamily. As to quaternary structure, forms a cyclic heterotetrameric complex composed of two molecules of XerC and two molecules of XerD.

The protein resides in the cytoplasm. In terms of biological role, site-specific tyrosine recombinase, which acts by catalyzing the cutting and rejoining of the recombining DNA molecules. The XerC-XerD complex is essential to convert dimers of the bacterial chromosome into monomers to permit their segregation at cell division. It also contributes to the segregational stability of plasmids. This Corynebacterium glutamicum (strain ATCC 13032 / DSM 20300 / JCM 1318 / BCRC 11384 / CCUG 27702 / LMG 3730 / NBRC 12168 / NCIMB 10025 / NRRL B-2784 / 534) protein is Tyrosine recombinase XerC.